The sequence spans 665 residues: Dystrophia myotonica WD repeat-containing protein (665 aa).

Residues 1–11 (MAAGGAEGGPG) are compositionally biased toward gly residues. Disordered stretches follow at residues 1-91 (MAAG…PALP) and 100-119 (LGDPDGAGEPPSTPSGLGAG). Alanine 2 bears the N-acetylalanine mark. Over residues 52-64 (PAPPQPTQPPPGP) the composition is skewed to pro residues. The segment covering 65-76 (AAASGPGAAGPA) has biased composition (low complexity). The segment covering 77-89 (SSPPPAGPGPGPA) has biased composition (pro residues). 4 WD repeats span residues 208-248 (IDKT…TSTP), 279-318 (VGEGPLNEFAFSPDGRHLACVSQDGCLRVFHFDSMLLRGL), 321-360 (SYFGGLLCVCWSPDGRYVVTGGEDDLVTVWSFTEGRVVAR), and 363-445 (GHKS…LSPH). Disordered regions lie at residues 380-413 (AEEAASASADGDPSGEEEEPEVTSSDTGAPVSPL), 446-506 (PSLA…SMEP), 524-564 (RDRG…RSRL), and 628-665 (DEETEAQAGQASWPRSPSKSVVEGISSQPGSSPSGTVV). Positions 450 to 491 (RTRTLPGTPGATPPASGSSRAGETGAGPLPRSLSRSNSLPHP) are enriched in low complexity. Position 487 is a phosphoserine (serine 487). An Omega-N-methylarginine modification is found at arginine 543. The WD 5 repeat unit spans residues 592 to 629 (IAQERLTVLLFLEDCIITACQEGLICTWARPGKAFTDE). The span at 634 to 646 (QAGQASWPRSPSK) shows a compositional bias: polar residues. Residues 653 to 665 (SSQPGSSPSGTVV) are compositionally biased toward low complexity.

As to quaternary structure, component of the USP12/DMWD/WDR48 deubiquitinating complex. Interacts with USP12; promotes its enzymatic activity. Interacts with USP46. In terms of tissue distribution, widely expressed in brain where it localizes to the olfactory bulb, forebrain, thalamus, hippocampus, cerebellum, cortex and hypothalamus (at protein level). Expression seems to be particularly strong in areas of high synaptic density such as the glomerular layer of the olfactory bulb, and mossy fiber terminal fields of the hippocampus (at protein level). Expressed in retina, with strongest expression in the external and internal plexiform layers (at protein level). Strongly expressed in brain and testis. Also detected at lower levels in heart, kidney, liver, lung, ovary, uterus, bladder and skeletal muscle. In testis, expression seems to be restricted to secondary spermatocytes.

The protein resides in the cytoplasm. Its subcellular location is the nucleus. It is found in the perikaryon. It localises to the cell projection. The protein localises to the dendrite. Functionally, regulator of the deubiquitinating USP12/DMWD/WDR48 complex. Functions as a cofactor that promotes USP12 enzymatic activity. This is Dystrophia myotonica WD repeat-containing protein (Dmwd) from Mus musculus (Mouse).